A 71-amino-acid chain; its full sequence is Pre-hexon-linking protein VIII (71 aa).

This sequence belongs to the adenoviridae hexon-linking protein family. In terms of assembly, interacts with the peripentonal hexons as well as the hexons in the facets. Part of a complex composed of the core-capsid bridging protein, the endosome lysis protein VI and the hexon-linking protein VIII; these interactions bridge the virus core to the capsid. Cleaved by the viral protease during virion maturation. May cause the middle segment to be shed from the capsid.

The protein localises to the host nucleus. The protein resides in the virion. Its function is as follows. Structural component of the virion that acts as a cement protein on the capsid interior and which glue the peripentonal hexons and group-of-nine hexons together. The chain is Pre-hexon-linking protein VIII from Canine adenovirus serotype 1 (strain Glaxo) (CAdV-1).